The sequence spans 93 residues: Small ribosomal subunit protein uS15 (93 aa).

This sequence belongs to the universal ribosomal protein uS15 family. In terms of assembly, part of the 30S ribosomal subunit. Forms a bridge to the 50S subunit in the 70S ribosome, contacting the 23S rRNA.

Its function is as follows. One of the primary rRNA binding proteins, it binds directly to 16S rRNA where it helps nucleate assembly of the platform of the 30S subunit by binding and bridging several RNA helices of the 16S rRNA. Forms an intersubunit bridge (bridge B4) with the 23S rRNA of the 50S subunit in the ribosome. This chain is Small ribosomal subunit protein uS15, found in Anaplasma marginale (strain Florida).